A 327-amino-acid chain; its full sequence is Movement protein (327 aa).

Positions 297–327 form a coiled coil; the sequence is SASSSNTENELARVSQNIDLLKNKLKEICGE.

It belongs to the caulimoviridae movement protein family. In terms of assembly, homotrimer, through the coiled-coil domain. Interacts with VAP. May interact (via N-terminus) with host prenylated Rab acceptor protein 1D (PRA1D).

It localises to the host cell junction. It is found in the host plasmodesma. Transports viral genome to neighboring plant cells directly through plasmosdesmata, without any budding. The movement protein allows efficient cell to cell propagation, by bypassing the host cell wall barrier. Acts by forming tubules structures that increase the size exclusion limit (SEL) of plasmodesmata, thereby allowing viral ribonucleocapsids to spread directly to neighboring cells. The polypeptide is Movement protein (Cauliflower mosaic virus (strain W260) (CaMV)).